The chain runs to 258 residues: Retron Ec83 putative HNH endonuclease (258 aa).

Its function is as follows. Putative HNH endonuclease component of antiviral defense system retron Ec83, composed of a non-coding RNA (ncRNA), a reverse transcriptase (RT), a probable ATPase and this protein. Expression of retron Ec78 confers protection against bacteriophage T2, T4 and T6. At multiplicity of infection (MOI) of 0.02 cultures slow growth when infected with T4 but do not collapse, at MOI 2 cultures enter growth stasis. The polypeptide is Retron Ec83 putative HNH endonuclease (Escherichia coli).